Consider the following 86-residue polypeptide: Cytochrome c oxidase subunit 6B1 (86 aa).

An N-acetylalanine modification is found at Ala2. Residues 27–73 enclose the CHCH domain; the sequence is TRNCWQNYLDFHRCEKAMTAKGGDVSVCEWYRRVYKSLCPISWVSTW. The Cx9C motif motif lies at 30–40; the sequence is CWQNYLDFHRC. 2 cysteine pairs are disulfide-bonded: Cys30–Cys65 and Cys40–Cys54. The Cx10C motif signature appears at 54-65; sequence CEWYRRVYKSLC. An N6-acetyllysine modification is found at Lys62.

Belongs to the cytochrome c oxidase subunit 6B family. In terms of assembly, component of the cytochrome c oxidase (complex IV, CIV), a multisubunit enzyme composed of 14 subunits. The complex is composed of a catalytic core of 3 subunits MT-CO1, MT-CO2 and MT-CO3, encoded in the mitochondrial DNA, and 11 supernumerary subunits COX4I1 (or COX4I2), COX5A, COX5B, COX6A2 (or COX6A1), COX6B1 (or COX6B2), COX6C, COX7A1 (or COX7A2), COX7B, COX7C, COX8B and NDUFA4, which are encoded in the nuclear genome. The complex exists as a monomer or a dimer and forms supercomplexes (SCs) in the inner mitochondrial membrane with NADH-ubiquinone oxidoreductase (complex I, CI) and ubiquinol-cytochrome c oxidoreductase (cytochrome b-c1 complex, complex III, CIII), resulting in different assemblies (supercomplex SCI(1)III(2)IV(1) and megacomplex MCI(2)III(2)IV(2)).

The protein localises to the mitochondrion inner membrane. It functions in the pathway energy metabolism; oxidative phosphorylation. Functionally, component of the cytochrome c oxidase, the last enzyme in the mitochondrial electron transport chain which drives oxidative phosphorylation. The respiratory chain contains 3 multisubunit complexes succinate dehydrogenase (complex II, CII), ubiquinol-cytochrome c oxidoreductase (cytochrome b-c1 complex, complex III, CIII) and cytochrome c oxidase (complex IV, CIV), that cooperate to transfer electrons derived from NADH and succinate to molecular oxygen, creating an electrochemical gradient over the inner membrane that drives transmembrane transport and the ATP synthase. Cytochrome c oxidase is the component of the respiratory chain that catalyzes the reduction of oxygen to water. Electrons originating from reduced cytochrome c in the intermembrane space (IMS) are transferred via the dinuclear copper A center (CU(A)) of subunit 2 and heme A of subunit 1 to the active site in subunit 1, a binuclear center (BNC) formed by heme A3 and copper B (CU(B)). The BNC reduces molecular oxygen to 2 water molecules using 4 electrons from cytochrome c in the IMS and 4 protons from the mitochondrial matrix. The sequence is that of Cytochrome c oxidase subunit 6B1 (COX6B1) from Bos taurus (Bovine).